The following is a 465-amino-acid chain: Probable oxidoreductase AIM17 (465 aa).

A mitochondrion-targeting transit peptide spans 1–16 (MLRSNLCRGSRILARL). Fe cation contacts are provided by His-246, Asp-248, and His-428.

The protein belongs to the gamma-BBH/TMLD family. It depends on Fe(2+) as a cofactor. L-ascorbate serves as cofactor.

It is found in the mitochondrion. The polypeptide is Probable oxidoreductase AIM17 (AIM17) (Saccharomyces cerevisiae (strain ATCC 204508 / S288c) (Baker's yeast)).